Here is a 513-residue protein sequence, read N- to C-terminus: MSDKIQSRESKTTKPTKTEKISDKSGNLSQVKSSKNLSKSQSIYLEIDSLSKKFLEEGRQYIYKWIRDEYGLSKNEATALDISIYNTTIARMINIYKFDETLAAFLPFKFGKEIISPRQDFYGFATTCGTILYYQSFGDTLGYYNGNWEFNYGNDNRPDYVNDLISEFIHLGGINDISMVNWLASDDTILYLITARVVLEYFFQGDNAEISYFGTRLRQEYLKAKPLIQNRHPGQTTMDSLDIMSNIEWDKLPYNSRAIGAGAAMRSGSIGIFYPGRQNRKKLVALAVECSRITHNSATAILGSVTSALFTAFSLEKISVNLWPHYLLEILRSNIIDEYIEQSRPNEYSLFSRDKVIFQGQWEKYVSSRFSGVNPRDLRYMHNPVERYRYLTENFSKGCDMPGGCGDDCVIMAYDSLLQSNGVLEKVVVYSILHPGDSDTVGSVALSWFGAYYSTKKNLDILSPRFDELEYSNEINNLIWNTEDFVLGLTKVFYKFIYIDIATDLVEQSMKLK.

The span at 1–23 (MSDKIQSRESKTTKPTKTEKISD) shows a compositional bias: basic and acidic residues. Residues 1–33 (MSDKIQSRESKTTKPTKTEKISDKSGNLSQVKS) are disordered. Residues 24 to 33 (KSGNLSQVKS) are compositionally biased toward polar residues.

It belongs to the ADP-ribosylglycohydrolase family.

This Acanthamoeba polyphaga mimivirus (APMV) protein is Putative ADP-ribosyl glycohydrolase L444.